The sequence spans 225 residues: Insulin-induced gene 2 protein (225 aa).

Over 1-28 the chain is Cytoplasmic; that stretch reads MAEGETKSPGPKKCGPYISSVTSQSVNL. A helical membrane pass occupies residues 29–51; it reads MIRGVVLFFIGVFLALVLNLLQI. The Lumenal portion of the chain corresponds to 52–70; sequence QRNVTLFPPDVIASIFSSA. The chain crosses the membrane as a helical span at residues 71–88; the sequence is WWVPPCCGTASAVIGLLY. The Cytoplasmic segment spans residues 89–103; sequence PCIDRHLGEPHKFKR. Residues 104–126 form a helical membrane-spanning segment; that stretch reads EWSSVMRCVAVFVGINHASAKVD. Residues 127–129 lie on the Lumenal side of the membrane; that stretch reads FDN. The chain crosses the membrane as a helical span at residues 130–148; sequence NIQLSLTLAALSIGLWWTF. The Cytoplasmic portion of the chain corresponds to 149-153; sequence DRSRS. Residue Ser-151 is modified to Phosphoserine. Residues 154–175 traverse the membrane as a helical segment; sequence GFGLGVGIAFLATVVTQLLVYN. The Lumenal portion of the chain corresponds to 176 to 189; that stretch reads GVYQYTSPDFLYVR. Residues 190–207 traverse the membrane as a helical segment; the sequence is SWLPCIFFAGGITMGNIG. Over 208–225 the chain is Cytoplasmic; that stretch reads RQLAMYECKVIAEKSHQE. Residue Cys-215 is modified to Cysteine sulfenic acid (-SOH); alternate. Cys-215 participates in a covalent cross-link: Glycyl cysteine thioester (Cys-Gly) (interchain with G-Cter in ubiquitin); alternate. Positions 219–225 match the KxHxx motif; the sequence is AEKSHQE.

The protein belongs to the INSIG family. As to quaternary structure, interacts with SCAP; interaction is direct and only takes place in the presence of sterols; it prevents interaction between SCAP and the coat protein complex II (COPII). Associates with the SCAP-SREBP complex (composed of SCAP and SREBF1/SREBP1 or SREBF2/SREBP2); association is mediated via its interaction with SCAP and only takes place in the presence of sterols. Interacts with RNF139. Interacts with RNF145. In terms of processing, phosphorylation at Ser-151 by PCK1 reduces binding to oxysterol, disrupting the interaction between INSIG2 and SCAP, thereby promoting nuclear translocation of SREBP proteins (SREBF1/SREBP1 or SREBF2/SREBP2) and subsequent transcription of downstream lipogenesis-related genes. Post-translationally, polyubiquitinated by AMFR/gp78 at Cys-215 in some tissues such as adipose tissues, undifferentiated myoblasts and liver, leading to its degradation. In differentiated myotubes, Cys-215 oxidation prevents ubiquitination at the same site, resulting in protein stabilization. Oxidized at Cys-215 in differentiated myotubes, preventing ubiquitination at the same site, and resulting in protein stabilization.

The protein localises to the endoplasmic reticulum membrane. Its function is as follows. Oxysterol-binding protein that mediates feedback control of cholesterol synthesis by controlling both endoplasmic reticulum to Golgi transport of SCAP and degradation of HMGCR. Acts as a negative regulator of cholesterol biosynthesis by mediating the retention of the SCAP-SREBP complex in the endoplasmic reticulum, thereby blocking the processing of sterol regulatory element-binding proteins (SREBPs) SREBF1/SREBP1 and SREBF2/SREBP2. Binds oxysterol, including 22-hydroxycholesterol, 24-hydroxycholesterol, 25-hydroxycholesterol and 27-hydroxycholesterol, regulating interaction with SCAP and retention of the SCAP-SREBP complex in the endoplasmic reticulum. In presence of oxysterol, interacts with SCAP, retaining the SCAP-SREBP complex in the endoplasmic reticulum, thereby preventing SCAP from escorting SREBF1/SREBP1 and SREBF2/SREBP2 to the Golgi. Sterol deprivation or phosphorylation by PCK1 reduce oxysterol-binding, disrupting the interaction between INSIG2 and SCAP, thereby promoting Golgi transport of the SCAP-SREBP complex, followed by processing and nuclear translocation of SREBF1/SREBP1 and SREBF2/SREBP2. Also regulates cholesterol synthesis by regulating degradation of HMGCR: initiates the sterol-mediated ubiquitin-mediated endoplasmic reticulum-associated degradation (ERAD) of HMGCR via recruitment of the reductase to the ubiquitin ligase RNF139. The polypeptide is Insulin-induced gene 2 protein (Pongo abelii (Sumatran orangutan)).